The primary structure comprises 614 residues: Probable Xaa-Pro aminopeptidase P (614 aa).

Mn(2+) contacts are provided by D411, D422, E520, and E534.

This sequence belongs to the peptidase M24B family. The cofactor is Mn(2+).

The catalysed reaction is Release of any N-terminal amino acid, including proline, that is linked to proline, even from a dipeptide or tripeptide.. Catalyzes the removal of a penultimate prolyl residue from the N-termini of peptides. The polypeptide is Probable Xaa-Pro aminopeptidase P (AMPP) (Sordaria macrospora (strain ATCC MYA-333 / DSM 997 / K(L3346) / K-hell)).